The following is a 993-amino-acid chain: uncharacterized protein (993 aa).

An N-terminal signal peptide occupies residues 1 to 24 (MLLFKFNFTTAFLFTILAFAQARS). N-linked (GlcNAc...) asparagine glycosylation is found at asparagine 7, asparagine 44, asparagine 89, asparagine 121, asparagine 138, asparagine 161, asparagine 169, asparagine 232, asparagine 361, asparagine 386, asparagine 393, asparagine 423, asparagine 447, asparagine 480, and asparagine 488. Glutamate 504 is a catalytic residue. N-linked (GlcNAc...) asparagine glycosylation is found at asparagine 545, asparagine 548, and asparagine 614. Aspartate 672 functions as the Proton donor in the catalytic mechanism. Asparagine 673, asparagine 814, asparagine 826, asparagine 835, asparagine 846, asparagine 910, asparagine 940, and asparagine 987 each carry an N-linked (GlcNAc...) asparagine glycan.

It belongs to the glycosyl hydrolase 31 family.

This is an uncharacterized protein from Schizosaccharomyces pombe (strain 972 / ATCC 24843) (Fission yeast).